Reading from the N-terminus, the 208-residue chain is LexA repressor (208 aa).

The segment at residues arginine 28–lysine 48 is a DNA-binding region (H-T-H motif). Catalysis depends on for autocatalytic cleavage activity residues serine 125 and lysine 162.

This sequence belongs to the peptidase S24 family. As to quaternary structure, homodimer.

The enzyme catalyses Hydrolysis of Ala-|-Gly bond in repressor LexA.. Its function is as follows. Represses a number of genes involved in the response to DNA damage (SOS response), including recA and lexA. In the presence of single-stranded DNA, RecA interacts with LexA causing an autocatalytic cleavage which disrupts the DNA-binding part of LexA, leading to derepression of the SOS regulon and eventually DNA repair. This Aliivibrio fischeri (strain ATCC 700601 / ES114) (Vibrio fischeri) protein is LexA repressor.